The chain runs to 246 residues: Large ribosomal subunit protein uL30-like 1 (246 aa).

Phosphoserine is present on Ser-54.

The protein belongs to the universal ribosomal protein uL30 family.

The polypeptide is Large ribosomal subunit protein uL30-like 1 (Rpl7l1) (Mus musculus (Mouse)).